A 268-amino-acid polypeptide reads, in one-letter code: 4-hydroxy-tetrahydrodipicolinate reductase (268 aa).

NAD(+)-binding positions include 7-12 (GAGGRM) and E33. Residue R34 coordinates NADP(+). NAD(+)-binding positions include 97–99 (GTT) and 121–124 (SGNM). The active-site Proton donor/acceptor is the H155. Position 156 (H156) interacts with (S)-2,3,4,5-tetrahydrodipicolinate. K159 (proton donor) is an active-site residue. Residue 165–166 (GT) participates in (S)-2,3,4,5-tetrahydrodipicolinate binding.

It belongs to the DapB family.

Its subcellular location is the cytoplasm. It catalyses the reaction (S)-2,3,4,5-tetrahydrodipicolinate + NAD(+) + H2O = (2S,4S)-4-hydroxy-2,3,4,5-tetrahydrodipicolinate + NADH + H(+). The catalysed reaction is (S)-2,3,4,5-tetrahydrodipicolinate + NADP(+) + H2O = (2S,4S)-4-hydroxy-2,3,4,5-tetrahydrodipicolinate + NADPH + H(+). It participates in amino-acid biosynthesis; L-lysine biosynthesis via DAP pathway; (S)-tetrahydrodipicolinate from L-aspartate: step 4/4. Catalyzes the conversion of 4-hydroxy-tetrahydrodipicolinate (HTPA) to tetrahydrodipicolinate. The chain is 4-hydroxy-tetrahydrodipicolinate reductase from Brucella abortus (strain 2308).